Consider the following 287-residue polypeptide: Inhibitory synaptic factor 1 (287 aa).

Positions 1-22 are disordered; it reads MSQSRAPAREPSETPSQREQIR. Positions 25-58 form a coiled coil; the sequence is MKMVIQQLEGILKELKDVAHELREVVGQIDKLTS. Disordered stretches follow at residues 113–174 and 189–287; these read RRSA…GTRE and CDDD…NKDL. Over residues 153–167 the composition is skewed to low complexity; it reads EEASSSTHSQSQKTS. Residues 189–209 are compositionally biased toward acidic residues; sequence CDDDEDEDEDEDGRDEEEDKL. Residues 259–274 show a composition bias toward polar residues; that stretch reads RNSSTQTVSDKSTQTL.

The protein belongs to the INSYN1 family.

It localises to the postsynaptic density. Its function is as follows. May be a component of the protein machinery at the inhibitory synapses, probably acting as a scaffold. In Danio rerio (Zebrafish), this protein is Inhibitory synaptic factor 1.